We begin with the raw amino-acid sequence, 576 residues long: Coilin (576 aa).

Position 105 is a phosphoserine (Ser-105). Residue Thr-122 is modified to Phosphothreonine. Disordered stretches follow at residues 125–330 and 352–389; these read DCKY…CLMS and RPGP…SLPA. Residues Lys-127, Lys-151, and Lys-160 each participate in a glycyl lysine isopeptide (Lys-Gly) (interchain with G-Cter in SUMO2) cross-link. Ser-184 is modified (phosphoserine; by VRK1 and VRK2). Residues Lys-204 and Lys-209 each participate in a glycyl lysine isopeptide (Lys-Gly) (interchain with G-Cter in SUMO2) cross-link. A compositionally biased stretch (polar residues) spans 214–225; the sequence is QRCSSPKGSARN. The 1-1 repeat unit spans residues 223–226; the sequence is ARNS. A 2 X 4 AA repeats of A-R-N-S region spans residues 223-271; the sequence is ARNSLVKAKRKGSVSVCSKESPSSSSESESCDESISDGPSKVTLEARNS. Over residues 235-250 the composition is skewed to low complexity; that stretch reads SVSVCSKESPSSSSES. Phosphoserine is present on residues Ser-248, Ser-250, Ser-256, Ser-271, and Ser-272. The stretch at 268 to 271 is one 1-2 repeat; it reads ARNS. Residues 270–285 are compositionally biased toward basic and acidic residues; that stretch reads NSSEKLPTELSKEEPS. Residues Lys-274 and Lys-281 each participate in a glycyl lysine isopeptide (Lys-Gly) (interchain with G-Cter in SUMO2) cross-link. Phosphothreonine is present on Thr-290. Residues Lys-293 and Lys-297 each participate in a glycyl lysine isopeptide (Lys-Gly) (interchain with G-Cter in SUMO2) cross-link. Position 301 is a phosphoserine (Ser-301). The span at 301-320 shows a compositional bias: low complexity; that stretch reads SLTPSKGKTSGTTSSSSDSS. Thr-303 is modified (phosphothreonine). The stretch at 386–389 is one 2-1 repeat; it reads SLPA. The tract at residues 386–520 is 2 X 4 AA repeats of S-L-P-A; the sequence is SLPASLGRGW…DIEILSSLPA (135 aa). The interval 392-420 is required for interaction with SMN; it reads GRGWGREENLFSWKGAKGRGMRGRGRGRG. Ser-403 is subject to Phosphoserine. Tandem repeats lie at residues 413–414, 415–416, 417–418, and 419–420. Residues 413-420 form a 4 X 2 AA tandem repeats of R-G region; it reads RGRGRGRG. Residue Lys-444 forms a Glycyl lysine isopeptide (Lys-Gly) (interchain with G-Cter in SUMO2) linkage. Thr-456 carries the post-translational modification Phosphothreonine. Positions 460-559 constitute a Tudor; atypical domain; sequence DYSLLPLLAA…ITVFWKELID (100 aa). Ser-487 and Ser-489 each carry phosphoserine. Lys-496 participates in a covalent cross-link: Glycyl lysine isopeptide (Lys-Gly) (interchain with G-Cter in SUMO2). Residues 517 to 520 form a 2-2 repeat; sequence SLPA. Phosphoserine is present on Ser-566.

The protein belongs to the coilin family. As to quaternary structure, interacts with ANKS1B. Interacts with SMN1 (via Tudor domain). Interacts (via C-terminus) with AK6. Interacts with WRAP53/TCAB1. Interacts with HMBOX1. Interacts with PSME3; the interaction is inhibited by PSME3IP1. Interacts wit UBL5. Symmetrical dimethylation of arginine residues within the RG repeat region enhances affinity for SMN, and thus localization of SMN complexes to CBs. In terms of processing, phosphorylated by VRK1. Phosphorylation during mitosis is associated with disassembly of CBs. Found in all the cell types examined.

It localises to the nucleus. Its subcellular location is the cajal body. Its function is as follows. Component of nuclear coiled bodies, also known as Cajal bodies or CBs, which are involved in the modification and assembly of nucleoplasmic snRNPs. The protein is Coilin (COIL) of Homo sapiens (Human).